Consider the following 359-residue polypeptide: Peptide chain release factor 1 (359 aa).

Gln236 carries the post-translational modification N5-methylglutamine. The interval 288-308 is disordered; sequence QDEQDAERKSTIGTGDRSERI. Positions 293-308 are enriched in basic and acidic residues; the sequence is AERKSTIGTGDRSERI.

Belongs to the prokaryotic/mitochondrial release factor family. Post-translationally, methylated by PrmC. Methylation increases the termination efficiency of RF1.

It localises to the cytoplasm. Peptide chain release factor 1 directs the termination of translation in response to the peptide chain termination codons UAG and UAA. This Streptococcus uberis (strain ATCC BAA-854 / 0140J) protein is Peptide chain release factor 1.